Here is a 476-residue protein sequence, read N- to C-terminus: Glycogen synthase (476 aa).

Lys15 contacts ADP-alpha-D-glucose.

This sequence belongs to the glycosyltransferase 1 family. Bacterial/plant glycogen synthase subfamily.

The catalysed reaction is [(1-&gt;4)-alpha-D-glucosyl](n) + ADP-alpha-D-glucose = [(1-&gt;4)-alpha-D-glucosyl](n+1) + ADP + H(+). The protein operates within glycan biosynthesis; glycogen biosynthesis. Its function is as follows. Synthesizes alpha-1,4-glucan chains using ADP-glucose. In Yersinia enterocolitica serotype O:8 / biotype 1B (strain NCTC 13174 / 8081), this protein is Glycogen synthase.